We begin with the raw amino-acid sequence, 75 residues long: MHAKIEIEIEEEKDGSLILKYNGMKIGDLNDVNPADELRLVNELIKVREKEMSTSDINKEIEHRLAKLLAWYYTE.

This is an uncharacterized protein from Acidianus filamentous virus 1 (isolate United States/Yellowstone) (AFV-1).